Consider the following 335-residue polypeptide: N-acetyl-gamma-glutamyl-phosphate reductase (335 aa).

Residue Cys147 is part of the active site.

This sequence belongs to the NAGSA dehydrogenase family. Type 1 subfamily.

The protein localises to the cytoplasm. The catalysed reaction is N-acetyl-L-glutamate 5-semialdehyde + phosphate + NADP(+) = N-acetyl-L-glutamyl 5-phosphate + NADPH + H(+). It participates in amino-acid biosynthesis; L-arginine biosynthesis; N(2)-acetyl-L-ornithine from L-glutamate: step 3/4. Functionally, catalyzes the NADPH-dependent reduction of N-acetyl-5-glutamyl phosphate to yield N-acetyl-L-glutamate 5-semialdehyde. The sequence is that of N-acetyl-gamma-glutamyl-phosphate reductase from Sulfurovum sp. (strain NBC37-1).